The chain runs to 318 residues: Ribosomal RNA small subunit methyltransferase H (318 aa).

S-adenosyl-L-methionine-binding positions include 38–40 (GGH), D58, Y86, D107, and Q114.

The protein belongs to the methyltransferase superfamily. RsmH family.

The protein resides in the cytoplasm. It catalyses the reaction cytidine(1402) in 16S rRNA + S-adenosyl-L-methionine = N(4)-methylcytidine(1402) in 16S rRNA + S-adenosyl-L-homocysteine + H(+). In terms of biological role, specifically methylates the N4 position of cytidine in position 1402 (C1402) of 16S rRNA. The polypeptide is Ribosomal RNA small subunit methyltransferase H (Methylibium petroleiphilum (strain ATCC BAA-1232 / LMG 22953 / PM1)).